The primary structure comprises 224 residues: 7-cyano-7-deazaguanine synthase (224 aa).

9–19 (ISGGMDSTLCA) lines the ATP pocket. Zn(2+) is bound by residues cysteine 190, cysteine 198, cysteine 201, and cysteine 204.

The protein belongs to the QueC family. Zn(2+) is required as a cofactor.

It carries out the reaction 7-carboxy-7-deazaguanine + NH4(+) + ATP = 7-cyano-7-deazaguanine + ADP + phosphate + H2O + H(+). Its pathway is purine metabolism; 7-cyano-7-deazaguanine biosynthesis. In terms of biological role, catalyzes the ATP-dependent conversion of 7-carboxy-7-deazaguanine (CDG) to 7-cyano-7-deazaguanine (preQ(0)). This chain is 7-cyano-7-deazaguanine synthase, found in Campylobacter jejuni (strain RM1221).